The sequence spans 642 residues: Threonine--tRNA ligase (642 aa).

The TGS domain occupies 1 to 61 (MPVVTLPDGS…DSDANLAIIT (61 aa)). Residues 243–534 (DHRKIGKQLD…LTEEYAGFFP (292 aa)) form a catalytic region. Zn(2+) is bound by residues C334, H385, and H511.

The protein belongs to the class-II aminoacyl-tRNA synthetase family. Homodimer. Zn(2+) is required as a cofactor.

It is found in the cytoplasm. It carries out the reaction tRNA(Thr) + L-threonine + ATP = L-threonyl-tRNA(Thr) + AMP + diphosphate + H(+). In terms of biological role, catalyzes the attachment of threonine to tRNA(Thr) in a two-step reaction: L-threonine is first activated by ATP to form Thr-AMP and then transferred to the acceptor end of tRNA(Thr). Also edits incorrectly charged L-seryl-tRNA(Thr). This chain is Threonine--tRNA ligase, found in Photorhabdus laumondii subsp. laumondii (strain DSM 15139 / CIP 105565 / TT01) (Photorhabdus luminescens subsp. laumondii).